The following is a 340-amino-acid chain: Guanine nucleotide-binding protein G(I)/G(S)/G(T) subunit beta-3 (340 aa).

WD repeat units lie at residues 53 to 83 (GHLAKIYAMHWATDSKLLVSASQDGKLIVWD), 95 to 125 (LRSSWVMTCAYAPSGNFVACGGLDNMCSIYS), 141 to 170 (AHTGYLSCCRFLDDNNIVTSSGDTTCALWD), 182 to 212 (GHTGDCMSLAVSPDFKLFISGACDASAKLWD), 224 to 254 (GHESDINAICFFPNGEAICTGSDDASCRLFD), 268 to 298 (SIICGITSVAFSLSGRLLFAGYDDFNCNIWD), and 310 to 340 (GHDNRVSCLGVTADGMAVATGSWDSFLKVWN).

This sequence belongs to the WD repeat G protein beta family. As to quaternary structure, g proteins are composed of 3 units, alpha, beta and gamma. Interacts with RASD2.

It is found in the cytoplasm. The protein localises to the perinuclear region. Guanine nucleotide-binding proteins (G proteins) are involved as a modulator or transducer in various transmembrane signaling systems. The beta and gamma chains are required for the GTPase activity, for replacement of GDP by GTP, and for G protein-effector interaction. This is Guanine nucleotide-binding protein G(I)/G(S)/G(T) subunit beta-3 (GNB3) from Canis lupus familiaris (Dog).